A 127-amino-acid polypeptide reads, in one-letter code: MATASRKKKKVKVTPEGTVHIKASFNNIMVTITDTLGNTVSWSSAGKNGFRGSKKNTPYASQVTSEAAAKEAYDLGMRYVDVLIKGPGSGRDAAIRALQGVGLEVRSIRDITPLPHNGCRPPKRRRV.

Belongs to the universal ribosomal protein uS11 family. In terms of assembly, part of the 30S ribosomal subunit. Interacts with proteins S7 and S18. Binds to IF-3.

Its function is as follows. Located on the platform of the 30S subunit, it bridges several disparate RNA helices of the 16S rRNA. Forms part of the Shine-Dalgarno cleft in the 70S ribosome. This Chlorobaculum parvum (strain DSM 263 / NCIMB 8327) (Chlorobium vibrioforme subsp. thiosulfatophilum) protein is Small ribosomal subunit protein uS11.